Here is a 507-residue protein sequence, read N- to C-terminus: Serine/threonine-protein kinase BSK11 (507 aa).

A lipid anchor (N-myristoyl glycine) is attached at G2. Positions 16–26 (DKKITSDDLSG) are enriched in basic and acidic residues. The disordered stretch occupies residues 16-44 (DKKITSDDLSGRRGKGAKRGNRHRHANIN). The span at 27-41 (RRGKGAKRGNRHRHA) shows a compositional bias: basic residues. Positions 75-332 (NAVVSVCSDQ…GDIISVITTL (258 aa)) constitute a Protein kinase domain. Residues 81 to 89 (CSDQEPNLV) and K106 each bind ATP. The active-site Proton acceptor is D200.

The protein belongs to the protein kinase superfamily. Ser/Thr protein kinase family. As to quaternary structure, interacts with BRI1, ASK7/BIN2, BSK1, BSK6 and BSK8. In terms of processing, phosphorylated by BRI1, ASK7/BIN2 and ASK9/BIL2.

The protein localises to the cell membrane. It catalyses the reaction L-seryl-[protein] + ATP = O-phospho-L-seryl-[protein] + ADP + H(+). The enzyme catalyses L-threonyl-[protein] + ATP = O-phospho-L-threonyl-[protein] + ADP + H(+). In terms of biological role, probable serine/threonine kinase that acts as a positive regulator of brassinosteroid (BR) signaling downstream of the receptor kinase BRI1. The polypeptide is Serine/threonine-protein kinase BSK11 (Arabidopsis thaliana (Mouse-ear cress)).